The sequence spans 50 residues: Fungus-induced protein 3 (50 aa).

The protein is Fungus-induced protein 3 (fip-3) of Caenorhabditis elegans.